A 128-amino-acid polypeptide reads, in one-letter code: Small ribosomal subunit protein uS8 (128 aa).

The protein belongs to the universal ribosomal protein uS8 family. As to quaternary structure, part of the 30S ribosomal subunit. Contacts proteins S5 and S12.

Its function is as follows. One of the primary rRNA binding proteins, it binds directly to 16S rRNA central domain where it helps coordinate assembly of the platform of the 30S subunit. The sequence is that of Small ribosomal subunit protein uS8 from Methylacidiphilum infernorum (isolate V4) (Methylokorus infernorum (strain V4)).